The sequence spans 877 residues: Alanine--tRNA ligase (877 aa).

His561, His565, Cys669, and His673 together coordinate Zn(2+).

It belongs to the class-II aminoacyl-tRNA synthetase family. The cofactor is Zn(2+).

Its subcellular location is the cytoplasm. It catalyses the reaction tRNA(Ala) + L-alanine + ATP = L-alanyl-tRNA(Ala) + AMP + diphosphate. Catalyzes the attachment of alanine to tRNA(Ala) in a two-step reaction: alanine is first activated by ATP to form Ala-AMP and then transferred to the acceptor end of tRNA(Ala). Also edits incorrectly charged Ser-tRNA(Ala) and Gly-tRNA(Ala) via its editing domain. The protein is Alanine--tRNA ligase of Endomicrobium trichonymphae.